The sequence spans 32 residues: ilv operon leader peptide (32 aa).

In terms of biological role, this protein is involved in control of the biosynthesis of isoleucine, leucine, and valine. The chain is ilv operon leader peptide (ivbL) from Escherichia coli (strain K12).